Reading from the N-terminus, the 264-residue chain is ATP synthase subunit a (264 aa).

The next 6 membrane-spanning stretches (helical) occupy residues 29–49, 90–110, 134–154, 177–197, 208–228, and 235–255; these read TWHI…LWIF, IAPL…MDMI, DVNI…YYSI, IPVN…SLAL, LIFI…SLGV, and LIFH…LTIV.

The protein belongs to the ATPase A chain family. In terms of assembly, F-type ATPases have 2 components, CF(1) - the catalytic core - and CF(0) - the membrane proton channel. CF(1) has five subunits: alpha(3), beta(3), gamma(1), delta(1), epsilon(1). CF(0) has three main subunits: a(1), b(2) and c(9-12). The alpha and beta chains form an alternating ring which encloses part of the gamma chain. CF(1) is attached to CF(0) by a central stalk formed by the gamma and epsilon chains, while a peripheral stalk is formed by the delta and b chains.

The protein localises to the cell inner membrane. Key component of the proton channel; it plays a direct role in the translocation of protons across the membrane. The chain is ATP synthase subunit a from Shewanella oneidensis (strain ATCC 700550 / JCM 31522 / CIP 106686 / LMG 19005 / NCIMB 14063 / MR-1).